A 240-amino-acid polypeptide reads, in one-letter code: Uridylate kinase (240 aa).

9 to 12 (KLSG) contacts ATP. Position 51 (Gly51) interacts with UMP. ATP contacts are provided by Gly52 and Arg56. UMP is bound by residues Asp71 and 132-139 (TGNPFFTT). Residues Thr159, Tyr165, and Asp168 each coordinate ATP.

It belongs to the UMP kinase family. As to quaternary structure, homohexamer.

The protein resides in the cytoplasm. It carries out the reaction UMP + ATP = UDP + ADP. It participates in pyrimidine metabolism; CTP biosynthesis via de novo pathway; UDP from UMP (UMPK route): step 1/1. Inhibited by UTP. Functionally, catalyzes the reversible phosphorylation of UMP to UDP. This Synechococcus elongatus (strain ATCC 33912 / PCC 7942 / FACHB-805) (Anacystis nidulans R2) protein is Uridylate kinase.